Consider the following 138-residue polypeptide: 1,4-dihydroxy-2-naphthoyl-CoA hydrolase (138 aa).

The active site involves D16.

This sequence belongs to the 4-hydroxybenzoyl-CoA thioesterase family. DHNA-CoA hydrolase subfamily.

It carries out the reaction 1,4-dihydroxy-2-naphthoyl-CoA + H2O = 1,4-dihydroxy-2-naphthoate + CoA + H(+). Its pathway is cofactor biosynthesis; phylloquinone biosynthesis. The protein operates within quinol/quinone metabolism; 1,4-dihydroxy-2-naphthoate biosynthesis; 1,4-dihydroxy-2-naphthoate from chorismate: step 7/7. Its function is as follows. Catalyzes the specific hydrolysis of 1,4-dihydroxy-2-naphthoyl-CoA (DHNA-CoA) to 1,4-dihydroxy-2-naphthoate (DHNA), a reaction involved in phylloquinone (vitamin K1) biosynthesis. Is not active on benzoyl-CoA, phenylacetyl-CoA and aliphatic acyl-CoA thioesters. The chain is 1,4-dihydroxy-2-naphthoyl-CoA hydrolase from Synechocystis sp. (strain ATCC 27184 / PCC 6803 / Kazusa).